A 251-amino-acid chain; its full sequence is E3 ubiquitin-protein ligase Os06g0535400 (251 aa).

3 consecutive transmembrane segments (helical) span residues 28–48 (VVAATFTGSFSLQIFLFYCFA), 102–122 (LANRCFAVVFMVFVPLVIVVF), and 127–147 (ADVVAYALCLANILVMVVWLS). An RING-type; atypical zinc finger spans residues 185–227 (CCVCLAGMREAQALRDLPRCGHRFHAKCIGKWLTAHPTCPVCR).

Its subcellular location is the membrane. It catalyses the reaction S-ubiquitinyl-[E2 ubiquitin-conjugating enzyme]-L-cysteine + [acceptor protein]-L-lysine = [E2 ubiquitin-conjugating enzyme]-L-cysteine + N(6)-ubiquitinyl-[acceptor protein]-L-lysine.. The protein operates within protein modification; protein ubiquitination. In terms of biological role, possesses E3 ubiquitin-protein ligase in vitro. The protein is E3 ubiquitin-protein ligase Os06g0535400 of Oryza sativa subsp. japonica (Rice).